The sequence spans 392 residues: Membrane cofactor protein (392 aa).

Residues 1-34 (MEPPGRRECPFPSWRFPGLLLAAMVLLLYSFSDA) form the signal peptide. 8 disulfide bridges follow: Cys-35–Cys-80, Cys-64–Cys-94, Cys-99–Cys-141, Cys-127–Cys-157, Cys-162–Cys-210, Cys-191–Cys-223, Cys-228–Cys-270, and Cys-256–Cys-283. 4 Sushi domains span residues 35–96 (CEEP…ACYR), 97–159 (ETCP…ICEK), 160–225 (VLCT…ECKV), and 226–285 (VKCR…KCLK). Topologically, residues 35–343 (CEEPPTFEAM…PEEGILDSLD (309 aa)) are extracellular. N-linked (GlcNAc...) asparagine glycosylation is found at Asn-83 and Asn-114. O-linked (GalNAc...) threonine glycosylation occurs at Thr-163. Asn-273 is a glycosylation site (N-linked (GlcNAc...) asparagine). Residues Ser-290 and Ser-291 are each glycosylated (O-linked (GalNAc...) serine). Over residues 291-315 (STKPPALSHSVSTSSTTKSPASSAS) the composition is skewed to low complexity. The interval 291–328 (STKPPALSHSVSTSSTTKSPASSASGPRPTYKPPVSNY) is disordered. An O-linked (GalNAc...) threonine glycan is attached at Thr-292. O-linked (GalNAc...) serine glycosylation is found at Ser-298, Ser-300, and Ser-302. An O-linked (GalNAc...) threonine glycan is attached at Thr-303. O-linked (GalNAc...) serine glycosylation is found at Ser-304 and Ser-305. Residues Thr-306 and Thr-307 are each glycosylated (O-linked (GalNAc...) threonine). O-linked (GalNAc...) serine glycans are attached at residues Ser-309, Ser-312, Ser-313, and Ser-315. Thr-320 carries O-linked (GalNAc...) threonine glycosylation. Tyr-321 bears the Phosphotyrosine mark. O-linked (GalNAc...) serine glycosylation is present at Ser-326. Phosphotyrosine is present on residues Asp-340, Ile-354, Val-355, Leu-369, Gln-370, and His-384. The chain crosses the membrane as a helical span at residues 344–366 (VWVIAVIVIAIVVGVAVICVVPY). The Cytoplasmic portion of the chain corresponds to 367 to 392 (RYLQRRKKKGTYLTDETHREVKFTSL).

Interacts with C3b. Interacts with C4b. Interacts with moesin/MSN. As to quaternary structure, (Microbial infection) Interacts (via N-terminus) with measles virus H protein; this interaction allows attachment and viral entry of vaccine and laboratory-adapted strains. In terms of assembly, (Microbial infection) Interacts with human herpesvirus 6 GH protein. (Microbial infection) Interacts with human adenovirus B/D fiber protein. As to quaternary structure, (Microbial infection) Binds to Streptococcus pyogenes M protein and to type IV pili from Neisseria. Post-translationally, N-glycosylated on Asn-83; Asn-114 and Asn-273 in most tissues, but probably less N-glycosylated in testis. N-glycosylation on Asn-114 and Asn-273 is required for cytoprotective function. N-glycosylation on Asn-114 is required for Measles virus binding. N-glycosylation on Asn-273 is required for Neisseria binding. N-glycosylation is not required for human adenovirus binding. Extensively O-glycosylated in the Ser/Thr-rich domain. O-glycosylation is required for Neisseria binding but not for Measles virus or human adenovirus binding. In terms of processing, in epithelial cells, isoforms B/D/F/H/J/L/3 are phosphorylated by YES1 in response to infection by Neisseria gonorrhoeae; which promotes infectivity. In T-cells, these isoforms may be phosphorylated by LCK. As to expression, expressed by all cells except erythrocytes.

It localises to the cytoplasmic vesicle. The protein resides in the secretory vesicle. It is found in the acrosome inner membrane. Its function is as follows. Acts as a cofactor for complement factor I, a serine protease which protects autologous cells against complement-mediated injury by cleaving C3b and C4b deposited on host tissue. May be involved in the fusion of the spermatozoa with the oocyte during fertilization. Also acts as a costimulatory factor for T-cells which induces the differentiation of CD4+ into T-regulatory 1 cells. T-regulatory 1 cells suppress immune responses by secreting interleukin-10, and therefore are thought to prevent autoimmunity. In terms of biological role, (Microbial infection) A number of viral and bacterial pathogens seem to bind MCP in order to exploit its immune regulation property and directly induce an immunosuppressive phenotype in T-cells. Functionally, (Microbial infection) Acts as a receptor for Adenovirus subgroup B2 and Ad3. (Microbial infection) Acts as a receptor for cultured Measles virus. Its function is as follows. (Microbial infection) Acts as a receptor for Herpesvirus 6/HHV-6. In terms of biological role, (Microbial infection) May act as a receptor for pathogenic bacteria Neisseria and Streptococcus pyogenes. The protein is Membrane cofactor protein (CD46) of Homo sapiens (Human).